A 127-amino-acid chain; its full sequence is Holo-[acyl-carrier-protein] synthase (127 aa).

2 residues coordinate Mg(2+): Asp-8 and Glu-60.

It belongs to the P-Pant transferase superfamily. AcpS family. Mg(2+) is required as a cofactor.

The protein localises to the cytoplasm. It catalyses the reaction apo-[ACP] + CoA = holo-[ACP] + adenosine 3',5'-bisphosphate + H(+). Its function is as follows. Transfers the 4'-phosphopantetheine moiety from coenzyme A to a Ser of acyl-carrier-protein. This chain is Holo-[acyl-carrier-protein] synthase, found in Marinomonas sp. (strain MWYL1).